A 272-amino-acid polypeptide reads, in one-letter code: Sulfur carrier protein FdhD (272 aa).

Cys-114 (cysteine persulfide intermediate) is an active-site residue.

The protein belongs to the FdhD family.

It is found in the cytoplasm. Functionally, required for formate dehydrogenase (FDH) activity. Acts as a sulfur carrier protein that transfers sulfur from IscS to the molybdenum cofactor prior to its insertion into FDH. The sequence is that of Sulfur carrier protein FdhD from Mycolicibacterium paratuberculosis (strain ATCC BAA-968 / K-10) (Mycobacterium paratuberculosis).